Consider the following 286-residue polypeptide: Polyamine aminopropyltransferase (286 aa).

In terms of domain architecture, PABS spans 5–242 (DNWFTEVLEE…GWWSATLASK (238 aa)). Gln-35 is a binding site for S-methyl-5'-thioadenosine. Spermidine is bound by residues His-66 and Asp-90. S-methyl-5'-thioadenosine-binding positions include Asp-110 and 141–142 (DG). Catalysis depends on Asp-160, which acts as the Proton acceptor. 160-163 (DSTD) lines the spermidine pocket.

The protein belongs to the spermidine/spermine synthase family. In terms of assembly, homodimer or homotetramer.

It is found in the cytoplasm. It catalyses the reaction S-adenosyl 3-(methylsulfanyl)propylamine + putrescine = S-methyl-5'-thioadenosine + spermidine + H(+). The protein operates within amine and polyamine biosynthesis; spermidine biosynthesis; spermidine from putrescine: step 1/1. Its function is as follows. Catalyzes the irreversible transfer of a propylamine group from the amino donor S-adenosylmethioninamine (decarboxy-AdoMet) to putrescine (1,4-diaminobutane) to yield spermidine. This is Polyamine aminopropyltransferase from Alkalilimnicola ehrlichii (strain ATCC BAA-1101 / DSM 17681 / MLHE-1).